The following is a 407-amino-acid chain: E3 ubiquitin-protein ligase TRIM13 (407 aa).

The RING-type zinc finger occupies cysteine 10 to arginine 58. The B box-type zinc finger occupies proline 89–isoleucine 131. Zn(2+) is bound by residues cysteine 94, histidine 97, cysteine 117, and histidine 123. The stretch at leucine 172–isoleucine 200 forms a coiled coil. A helical membrane pass occupies residues leucine 316–leucine 336.

This sequence belongs to the TRIM/RBCC family. Interacts (via C-terminal domain) with VCP. Interacts with AKT1; the interaction ubiquitinates AKT1 and leads to its proteasomal degradation. Interacts with MDM2; the interaction ubiquitinates AKT1 and leads to its proteasomal degradation. Interacts with p62/SQSTM1. Interacts with TRAF6. Interacts with IKBKG/NEMO. Post-translationally, auto-ubiquitinated; requires the RING-type zinc finger. Auto-polyubiquitination leads to proteasomal degradation.

The protein resides in the endoplasmic reticulum membrane. It carries out the reaction S-ubiquitinyl-[E2 ubiquitin-conjugating enzyme]-L-cysteine + [acceptor protein]-L-lysine = [E2 ubiquitin-conjugating enzyme]-L-cysteine + N(6)-ubiquitinyl-[acceptor protein]-L-lysine.. It functions in the pathway protein modification; protein ubiquitination. Endoplasmic reticulum (ER) membrane anchored E3 ligase involved in the retrotranslocation and turnover of membrane and secretory proteins from the ER through a set of processes named ER-associated degradation (ERAD). This process acts on misfolded proteins as well as in the regulated degradation of correctly folded proteins. Enhances ionizing radiation-induced p53/TP53 stability and apoptosis via ubiquitinating MDM2 and AKT1 and decreasing AKT1 kinase activity through MDM2 and AKT1 proteasomal degradation. Regulates ER stress-induced autophagy, and may act as a tumor suppressor. Also plays a role in innate immune response by stimulating NF-kappa-B activity in the TLR2 signaling pathway. Ubiquitinates TRAF6 via the 'Lys-29'-linked polyubiquitination chain resulting in NF-kappa-B activation. Participates as well in T-cell receptor-mediated NF-kappa-B activation. In the presence of TNF, modulates the IKK complex by regulating IKBKG/NEMO ubiquitination leading to the repression of NF-kappa-B. The polypeptide is E3 ubiquitin-protein ligase TRIM13 (Trim13) (Mus musculus (Mouse)).